The following is a 287-amino-acid chain: Bifunctional protein FolD (287 aa).

NADP(+) contacts are provided by residues 160–162 (GRS), Ser189, and Thr230.

This sequence belongs to the tetrahydrofolate dehydrogenase/cyclohydrolase family. As to quaternary structure, homodimer.

It carries out the reaction (6R)-5,10-methylene-5,6,7,8-tetrahydrofolate + NADP(+) = (6R)-5,10-methenyltetrahydrofolate + NADPH. It catalyses the reaction (6R)-5,10-methenyltetrahydrofolate + H2O = (6R)-10-formyltetrahydrofolate + H(+). It participates in one-carbon metabolism; tetrahydrofolate interconversion. Functionally, catalyzes the oxidation of 5,10-methylenetetrahydrofolate to 5,10-methenyltetrahydrofolate and then the hydrolysis of 5,10-methenyltetrahydrofolate to 10-formyltetrahydrofolate. This chain is Bifunctional protein FolD, found in Chlamydia trachomatis serovar D (strain ATCC VR-885 / DSM 19411 / UW-3/Cx).